The chain runs to 698 residues: Polyribonucleotide nucleotidyltransferase (698 aa).

The Mg(2+) site is built by Asp490 and Asp496. The 60-residue stretch at 557–616 (PKVVTMTIKPDKIRDVIGPGGKKINEIIDETGVKLDIEQDGTIFIGAVDQAMINRAREII) folds into the KH domain. In terms of domain architecture, S1 motif spans 626–694 (GQTYQATVKR…KQGRVNASHR (69 aa)).

The protein belongs to the polyribonucleotide nucleotidyltransferase family. Requires Mg(2+) as cofactor.

The protein resides in the cytoplasm. It catalyses the reaction RNA(n+1) + phosphate = RNA(n) + a ribonucleoside 5'-diphosphate. Its function is as follows. Involved in mRNA degradation. Catalyzes the phosphorolysis of single-stranded polyribonucleotides processively in the 3'- to 5'-direction. The sequence is that of Polyribonucleotide nucleotidyltransferase from Staphylococcus aureus (strain Mu3 / ATCC 700698).